The sequence spans 420 residues: Probable ABC transporter-binding protein DR_1438 (420 aa).

Positions 1-24 (MKKFAAVLGLTVAFAAASQAHAVT) are cleaved as a signal peptide.

Belongs to the bacterial solute-binding protein 1 family.

In terms of biological role, probably part of a binding-protein-dependent transport system. This Deinococcus radiodurans (strain ATCC 13939 / DSM 20539 / JCM 16871 / CCUG 27074 / LMG 4051 / NBRC 15346 / NCIMB 9279 / VKM B-1422 / R1) protein is Probable ABC transporter-binding protein DR_1438.